Reading from the N-terminus, the 482-residue chain is [Fructose-bisphosphate aldolase]-lysine N-methyltransferase, chloroplastic (482 aa).

A chloroplast-targeting transit peptide spans 1–57; the sequence is MSASVAVVSGFLRIPSIQKSQNPSFLFSRPKKSLVRPISASSSELPENVRNFWKWLR. Residues 59–282 form the SET domain; it reads QGVVSGKSVA…AGEQVYIQYD (224 aa). S-adenosyl-L-methionine-binding positions include 75-77 and Arg-217; that span reads EGL. 3 residues coordinate substrate: Arg-217, Arg-221, and Asp-234. 237–238 contributes to the S-adenosyl-L-methionine binding site; sequence NH. Substrate is bound by residues Tyr-249, Tyr-281, and Tyr-294.

Belongs to the class V-like SAM-binding methyltransferase superfamily. Plant protein-lysine LSMT methyltransferase family.

The protein localises to the plastid. It is found in the chloroplast stroma. The catalysed reaction is [fructose-bisphosphate aldolase]-L-lysine + 3 S-adenosyl-L-methionine = [fructose-bisphosphate aldolase]-N(6),N(6),N(6)-trimethyl-L-lysine + 3 S-adenosyl-L-homocysteine + 3 H(+). Protein-lysine methyltransferase methylating chloroplastic fructose 1,6-bisphosphate aldolases. Can also use with low efficiency gamma-tocopherol methyltransferase as substrate, but not a cytosolic aldolase. Able to interact with unmethylated Rubisco, but unlike in pea, the complex is catalytically unproductive. This Arabidopsis thaliana (Mouse-ear cress) protein is [Fructose-bisphosphate aldolase]-lysine N-methyltransferase, chloroplastic (LSMT-L).